The following is a 259-amino-acid chain: Putative zinc metalloprotease Rip2 (259 aa).

Helical transmembrane passes span 14-34 and 39-59; these read PIFL…WLAG and PLAY…SLCL. Residue histidine 60 participates in Zn(2+) binding. The active site involves glutamate 61. Histidine 64 serves as a coordination point for Zn(2+). The next 4 helical transmembrane spans lie at 97–117, 128–148, 156–176, and 215–235; these read GLPM…AVYV, TLVS…LLAA, IHAV…TALV, and LVLF…YWLF.

Belongs to the peptidase M50B family. The cofactor is Zn(2+).

Its subcellular location is the cell membrane. The sequence is that of Putative zinc metalloprotease Rip2 (rip2) from Mycobacterium tuberculosis (strain ATCC 35801 / TMC 107 / Erdman).